A 138-amino-acid polypeptide reads, in one-letter code: Nucleoside diphosphate kinase (138 aa).

Lysine 9, phenylalanine 57, arginine 85, threonine 91, arginine 102, and asparagine 112 together coordinate ATP. Catalysis depends on histidine 120, which acts as the Pros-phosphohistidine intermediate.

The protein belongs to the NDK family. In terms of assembly, homotetramer. Requires Mg(2+) as cofactor.

The protein resides in the cytoplasm. It catalyses the reaction a 2'-deoxyribonucleoside 5'-diphosphate + ATP = a 2'-deoxyribonucleoside 5'-triphosphate + ADP. The catalysed reaction is a ribonucleoside 5'-diphosphate + ATP = a ribonucleoside 5'-triphosphate + ADP. In terms of biological role, major role in the synthesis of nucleoside triphosphates other than ATP. The ATP gamma phosphate is transferred to the NDP beta phosphate via a ping-pong mechanism, using a phosphorylated active-site intermediate. This chain is Nucleoside diphosphate kinase, found in Streptococcus agalactiae serotype III (strain NEM316).